Consider the following 240-residue polypeptide: tRNA (guanine-N(1)-)-methyltransferase (240 aa).

Residues glycine 108 and 127-132 (LGDFIL) each bind S-adenosyl-L-methionine.

It belongs to the RNA methyltransferase TrmD family. In terms of assembly, homodimer.

Its subcellular location is the cytoplasm. It carries out the reaction guanosine(37) in tRNA + S-adenosyl-L-methionine = N(1)-methylguanosine(37) in tRNA + S-adenosyl-L-homocysteine + H(+). Functionally, specifically methylates guanosine-37 in various tRNAs. The sequence is that of tRNA (guanine-N(1)-)-methyltransferase from Streptococcus mutans serotype c (strain ATCC 700610 / UA159).